The chain runs to 289 residues: 4-diphosphocytidyl-2-C-methyl-D-erythritol kinase (289 aa).

The active site involves Lys10. 95 to 105 (PVSAGMGGGSA) contributes to the ATP binding site. Asp137 is an active-site residue.

Belongs to the GHMP kinase family. IspE subfamily.

The catalysed reaction is 4-CDP-2-C-methyl-D-erythritol + ATP = 4-CDP-2-C-methyl-D-erythritol 2-phosphate + ADP + H(+). Its pathway is isoprenoid biosynthesis; isopentenyl diphosphate biosynthesis via DXP pathway; isopentenyl diphosphate from 1-deoxy-D-xylulose 5-phosphate: step 3/6. Its function is as follows. Catalyzes the phosphorylation of the position 2 hydroxy group of 4-diphosphocytidyl-2C-methyl-D-erythritol. This is 4-diphosphocytidyl-2-C-methyl-D-erythritol kinase from Ligilactobacillus salivarius (strain UCC118) (Lactobacillus salivarius).